Here is a 208-residue protein sequence, read N- to C-terminus: Thymidylate kinase (208 aa).

10–17 contacts ATP; the sequence is GPDGSGKT.

Belongs to the thymidylate kinase family.

It carries out the reaction dTMP + ATP = dTDP + ADP. Functionally, phosphorylation of dTMP to form dTDP in both de novo and salvage pathways of dTTP synthesis. The sequence is that of Thymidylate kinase from Listeria monocytogenes serotype 4a (strain HCC23).